Reading from the N-terminus, the 149-residue chain is Deoxyuridine 5'-triphosphate nucleotidohydrolase (149 aa).

Residues 68–70 (RSG), asparagine 81, 85–87 (LID), and methionine 95 each bind substrate.

It belongs to the dUTPase family. Requires Mg(2+) as cofactor.

The catalysed reaction is dUTP + H2O = dUMP + diphosphate + H(+). It participates in pyrimidine metabolism; dUMP biosynthesis; dUMP from dCTP (dUTP route): step 2/2. Functionally, this enzyme is involved in nucleotide metabolism: it produces dUMP, the immediate precursor of thymidine nucleotides and it decreases the intracellular concentration of dUTP so that uracil cannot be incorporated into DNA. The sequence is that of Deoxyuridine 5'-triphosphate nucleotidohydrolase from Albidiferax ferrireducens (strain ATCC BAA-621 / DSM 15236 / T118) (Rhodoferax ferrireducens).